A 260-amino-acid polypeptide reads, in one-letter code: UPF0246 protein Bphyt_1375 (260 aa).

This sequence belongs to the UPF0246 family.

This chain is UPF0246 protein Bphyt_1375, found in Paraburkholderia phytofirmans (strain DSM 17436 / LMG 22146 / PsJN) (Burkholderia phytofirmans).